A 74-amino-acid polypeptide reads, in one-letter code: Small ribosomal subunit protein bS18 (74 aa).

The protein belongs to the bacterial ribosomal protein bS18 family. As to quaternary structure, part of the 30S ribosomal subunit. Forms a tight heterodimer with protein bS6.

Binds as a heterodimer with protein bS6 to the central domain of the 16S rRNA, where it helps stabilize the platform of the 30S subunit. The polypeptide is Small ribosomal subunit protein bS18 (Chlorobaculum tepidum (strain ATCC 49652 / DSM 12025 / NBRC 103806 / TLS) (Chlorobium tepidum)).